The chain runs to 470 residues: Small ribosomal subunit protein bS1m (470 aa).

Residues 436-470 (FKKIPMTAARLRGRYENSDSPSSPTMSGSSGYGLR) are disordered. Residues 453-464 (SDSPSSPTMSGS) are compositionally biased toward low complexity.

The protein belongs to the bacterial ribosomal protein bS1 family. Component of the mitochondrial small ribosomal subunit (mt-SSU). Mature N.crassa 74S mitochondrial ribosomes consist of a small (37S) and a large (54S) subunit. The 37S small subunit contains a 16S ribosomal RNA (16S mt-rRNA) and 32 different proteins. The 54S large subunit contains a 23S rRNA (23S mt-rRNA) and 42 different proteins.

It localises to the mitochondrion. In terms of biological role, component of the mitochondrial ribosome (mitoribosome), a dedicated translation machinery responsible for the synthesis of mitochondrial genome-encoded proteins, including at least some of the essential transmembrane subunits of the mitochondrial respiratory chain. The mitoribosomes are attached to the mitochondrial inner membrane and translation products are cotranslationally integrated into the membrane. The protein is Small ribosomal subunit protein bS1m (mrp51) of Neurospora crassa (strain ATCC 24698 / 74-OR23-1A / CBS 708.71 / DSM 1257 / FGSC 987).